We begin with the raw amino-acid sequence, 42 residues long: QGVRNHVTCRIYGGFCVPIRCPGRTRQIGTCFGRPVKCCRRW.

At glutamine 1 the chain carries Pyrrolidone carboxylic acid. 3 disulfides stabilise this stretch: cysteine 9/cysteine 38, cysteine 16/cysteine 31, and cysteine 21/cysteine 39.

This sequence belongs to the beta-defensin family. Neutrophilic granules.

The protein localises to the secreted. Has bactericidal activity. Active against E.coli ML35 and S.aureus 502A. The chain is Beta-defensin 6 (DEFB6) from Bos taurus (Bovine).